Reading from the N-terminus, the 488-residue chain is Capsid protein (488 aa).

Over residues 80–93 (ISEDESDSGEEPEF) the composition is skewed to acidic residues. Residues 80–143 (ISEDESDSGE…QPKTIPGQKQ (64 aa)) form a disordered region. Residues 94–109 (EQVRMDRTGGTEIPKE) are compositionally biased toward basic and acidic residues. The short motif at 121 to 124 (RKRK) is the Nuclear localization signal element. The segment covering 134 to 143 (QPKTIPGQKQ) has biased composition (polar residues). The segment at 410-427 (CRCWICNIEGHYANECPN) adopts a CCHC-type zinc-finger fold. A disordered region spans residues 463 to 488 (YKEEEEETSTEESDDESSTSEDSDSD). The segment covering 464 to 488 (KEEEEETSTEESDDESSTSEDSDSD) has biased composition (acidic residues).

It belongs to the caulimoviridae capsid protein family. Interacts (via nuclear localization signal) with host importin alpha.

The protein resides in the virion. It localises to the host nucleus. In terms of biological role, self assembles to form an icosahedral capsid, about 50 nm in diameter, nm, composed of 420 subunits of the viral capsid protein. The capsid encapsulates the genomic dsDNA. Following virus entry into host cell, provides nuclear import of the viral genome. Virus particles do not enter the nucleus, but dock at the nuclear membrane through the interaction with host importins. In Arabidopsis thaliana (Mouse-ear cress), this protein is Capsid protein.